A 79-amino-acid chain; its full sequence is Cytochrome b (79 aa).

3 helical membrane-spanning segments follow: residues 1-7, 31-52, and 67-79; these read TAMFLAM, WLIR…YLHI, and WNVG…LTMM. 2 residues coordinate heme b: H37 and H51.

Belongs to the cytochrome b family. The cytochrome bc1 complex contains 3 respiratory subunits (MT-CYB, CYC1 and UQCRFS1), 2 core proteins (UQCRC1 and UQCRC2) and probably 6 low-molecular weight proteins. Requires heme b as cofactor.

It is found in the mitochondrion inner membrane. In terms of biological role, component of the ubiquinol-cytochrome c reductase complex (complex III or cytochrome b-c1 complex) that is part of the mitochondrial respiratory chain. The b-c1 complex mediates electron transfer from ubiquinol to cytochrome c. Contributes to the generation of a proton gradient across the mitochondrial membrane that is then used for ATP synthesis. This is Cytochrome b (mt-cyb) from Hypsophrys nicaraguensis (Moga).